We begin with the raw amino-acid sequence, 442 residues long: Pentatricopeptide repeat-containing protein At2g27800, mitochondrial (442 aa).

The N-terminal 67 residues, 1 to 67, are a transit peptide targeting the mitochondrion; sequence MSATRSTFLG…SFLPSIHVRF (67 aa). 6 PPR repeats span residues 206–236, 244–286, 287–322, 323–357, 358–392, and 393–427; these read NENL…MVTS, TIRT…GIEP, DVFA…DCEP, NSFT…GFVP, NGKS…GRVV, and DFIS…QLVD.

This sequence belongs to the PPR family. P subfamily.

The protein resides in the mitochondrion. In Arabidopsis thaliana (Mouse-ear cress), this protein is Pentatricopeptide repeat-containing protein At2g27800, mitochondrial.